A 385-amino-acid polypeptide reads, in one-letter code: Bifunctional chorismate mutase/prephenate dehydratase (385 aa).

One can recognise a Chorismate mutase domain in the interval 1–92; sequence MPSKNDLLSF…ESVLTQKKLL (92 aa). The substrate site is built by arginine 11, arginine 28, lysine 39, aspartate 48, glutamate 52, serine 84, and glutamine 88. In terms of domain architecture, Prephenate dehydratase spans 105-285; the sequence is SFSFLGPKGS…NITRFILLSR (181 aa). The regulatory stretch occupies residues 286–385; that stretch reads KPVSISSKIP…PSENITPIIP (100 aa). One can recognise an ACT domain in the interval 299–376; the sequence is TLIFNTGQES…KFIKILGCYP (78 aa).

The protein resides in the cytoplasm. The catalysed reaction is chorismate = prephenate. It catalyses the reaction prephenate + H(+) = 3-phenylpyruvate + CO2 + H2O. Its pathway is amino-acid biosynthesis; L-phenylalanine biosynthesis; phenylpyruvate from prephenate: step 1/1. It functions in the pathway metabolic intermediate biosynthesis; prephenate biosynthesis; prephenate from chorismate: step 1/1. In terms of biological role, catalyzes the Claisen rearrangement of chorismate to prephenate and the decarboxylation/dehydration of prephenate to phenylpyruvate. This chain is Bifunctional chorismate mutase/prephenate dehydratase (pheA), found in Buchnera aphidicola subsp. Schizaphis graminum (strain Sg).